The following is a 193-amino-acid chain: Interferon epsilon (193 aa).

Residues 1 to 21 (MINKSFFEIMLVLLASSTGFS) form the signal peptide. An intrachain disulfide couples Cys53 to Cys163. Asn139 carries an N-linked (GlcNAc...) asparagine glycan.

This sequence belongs to the alpha/beta interferon family.

The protein localises to the secreted. Functionally, type I interferon required for maintaining basal levels of IFN-regulated genes, including 2'-5'-oligoadenylate synthetase, IRF7 and ISG15, in the female reproductive tract. Directly mediates protection against viral and bacterial genital infections. The chain is Interferon epsilon (IFNE) from Sus scrofa (Pig).